A 271-amino-acid polypeptide reads, in one-letter code: Putative pyruvate, phosphate dikinase regulatory protein (271 aa).

ADP is bound at residue 153–160 (GVSRTSKT).

This sequence belongs to the pyruvate, phosphate/water dikinase regulatory protein family. PDRP subfamily.

The catalysed reaction is N(tele)-phospho-L-histidyl/L-threonyl-[pyruvate, phosphate dikinase] + ADP = N(tele)-phospho-L-histidyl/O-phospho-L-threonyl-[pyruvate, phosphate dikinase] + AMP + H(+). The enzyme catalyses N(tele)-phospho-L-histidyl/O-phospho-L-threonyl-[pyruvate, phosphate dikinase] + phosphate + H(+) = N(tele)-phospho-L-histidyl/L-threonyl-[pyruvate, phosphate dikinase] + diphosphate. In terms of biological role, bifunctional serine/threonine kinase and phosphorylase involved in the regulation of the pyruvate, phosphate dikinase (PPDK) by catalyzing its phosphorylation/dephosphorylation. The protein is Putative pyruvate, phosphate dikinase regulatory protein of Shouchella clausii (strain KSM-K16) (Alkalihalobacillus clausii).